A 2135-amino-acid chain; its full sequence is Protein SUBSTANDARD STARCH GRAIN 4, chloroplastic (2135 aa).

Composition is skewed to low complexity over residues 1–10 (MSHCLRASPF) and 72–84 (QHQP…RQQQ). The N-terminal 42 residues, 1–42 (MSHCLRASPFLSPPPPLLHPSRRRRHRQGGCIHTSPGTRPLV), are a transit peptide targeting the chloroplast. Disordered regions lie at residues 1 to 44 (MSHC…LVAR) and 58 to 89 (SDSS…PPPP). Over 43 to 104 (ARARFDPPPL…ASLAPLWREG (62 aa)) the chain is Stromal. The chain crosses the membrane as a helical span at residues 105–125 (LFLVRCSVFAAALSVAAALSW). Residues 126–2135 (YAQLRARSFV…LFEYSATSQG (2010 aa)) lie on the Chloroplast intermembrane side of the membrane. Basic residues predominate over residues 361–370 (RRRYRRKAHS). 3 disordered regions span residues 361 to 382 (RRRY…SSQQ), 401 to 492 (SGNP…QVSE), and 1843 to 1869 (FLGS…SFKP). Polar residues-rich tracts occupy residues 373 to 382 (ISDTDNSSQQ), 454 to 490 (NFAS…NEQV), and 1846 to 1856 (SLSTSPDGQQS). A compositionally biased stretch (basic and acidic residues) spans 1857–1866 (ETERTPEHGS).

Belongs to the TamB family. Part of the TIC complex, which can interact with components of the TOC complex to form a larger import complex. Highly expressed in third leaf and developing seeds. Expressed in anthers, pistils, flag leaves and young panicles.

It is found in the plastid. The protein localises to the chloroplast inner membrane. Its subcellular location is the chloroplast intermembrane space. It localises to the chloroplast. The protein resides in the amyloplast. Part of the inner chloroplast membrane translocon complex (TIC) which associates with the outer chloroplast membrane translocon complex (TOC) and forms a supercomplex involved in protein precursor import into the chloroplast stroma. Required for the regulation of starch granule size in amyloplasts. This is Protein SUBSTANDARD STARCH GRAIN 4, chloroplastic from Oryza sativa subsp. japonica (Rice).